We begin with the raw amino-acid sequence, 48 residues long: Cuticle protein 6 isoform b (48 aa).

This Limulus polyphemus (Atlantic horseshoe crab) protein is Cuticle protein 6 isoform b.